Consider the following 369-residue polypeptide: MKSGRFIGVMSGTSLDGVDVVLATIDEHRVAQLASLSWPIPVSLKQAVLDICQGQQLTLSQFGQLDTQLGRLFADAVNALLKEQNLQARDIVAIGCHGQTVWHEPTGVAPHTLQIGDNNQIVARTGITVVGDFRRRDIALGGQGAPLVPAFHHALLAHPTERRMVLNIGGIANLSLLIPGQPVGGYDTGPGNMLMDAWIWRQAGKPYDKDAEWARAGKVILPLLQNMLCDPYFSQPAPKSTGREYFNYGWLERHLRHFPGVDPRDVQATLAELTAVTISEQVLLSGGCERLMVCGGGSRNPLLMARLAALLPGTEVTTTDAVGISGDDMEALAFAWLAWRTLAGLPGNLPSVTGASQETVLGAIFPANP.

Position 12–19 (12–19 (GTSLDGVD)) interacts with ATP.

The protein belongs to the anhydro-N-acetylmuramic acid kinase family.

It carries out the reaction 1,6-anhydro-N-acetyl-beta-muramate + ATP + H2O = N-acetyl-D-muramate 6-phosphate + ADP + H(+). Its pathway is amino-sugar metabolism; 1,6-anhydro-N-acetylmuramate degradation. The protein operates within cell wall biogenesis; peptidoglycan recycling. In terms of biological role, catalyzes the specific phosphorylation of 1,6-anhydro-N-acetylmuramic acid (anhMurNAc) with the simultaneous cleavage of the 1,6-anhydro ring, generating MurNAc-6-P. Is required for the utilization of anhMurNAc either imported from the medium or derived from its own cell wall murein, and thus plays a role in cell wall recycling. The sequence is that of Anhydro-N-acetylmuramic acid kinase from Escherichia coli O81 (strain ED1a).